We begin with the raw amino-acid sequence, 542 residues long: CTP synthase (542 aa).

Positions 1-265 are amidoligase domain; that stretch reads MARYIFITGG…DQEVLSAFGI (265 aa). Ser-13 lines the CTP pocket. Residue Ser-13 coordinates UTP. Residue 14 to 19 participates in ATP binding; sequence SLGKGL. Position 54 (Tyr-54) interacts with L-glutamine. Asp-71 serves as a coordination point for ATP. Mg(2+) is bound by residues Asp-71 and Glu-139. Residues 146–148, 186–191, and Lys-222 each bind CTP; these read DIE and KTKPTQ. Residues 186–191 and Lys-222 each bind UTP; that span reads KTKPTQ. 238–240 lines the ATP pocket; the sequence is RDV. The 251-residue stretch at 291–541 folds into the Glutamine amidotransferase type-1 domain; sequence TIAIVGKYTG…IAAAMEQSRL (251 aa). Gly-353 is an L-glutamine binding site. Catalysis depends on Cys-380, which acts as the Nucleophile; for glutamine hydrolysis. L-glutamine is bound by residues 381-384, Glu-404, and Arg-469; that span reads FGMQ. Catalysis depends on residues His-514 and Glu-516.

The protein belongs to the CTP synthase family. As to quaternary structure, homotetramer.

The enzyme catalyses UTP + L-glutamine + ATP + H2O = CTP + L-glutamate + ADP + phosphate + 2 H(+). It carries out the reaction L-glutamine + H2O = L-glutamate + NH4(+). It catalyses the reaction UTP + NH4(+) + ATP = CTP + ADP + phosphate + 2 H(+). It participates in pyrimidine metabolism; CTP biosynthesis via de novo pathway; CTP from UDP: step 2/2. Its activity is regulated as follows. Allosterically activated by GTP, when glutamine is the substrate; GTP has no effect on the reaction when ammonia is the substrate. The allosteric effector GTP functions by stabilizing the protein conformation that binds the tetrahedral intermediate(s) formed during glutamine hydrolysis. Inhibited by the product CTP, via allosteric rather than competitive inhibition. Its function is as follows. Catalyzes the ATP-dependent amination of UTP to CTP with either L-glutamine or ammonia as the source of nitrogen. Regulates intracellular CTP levels through interactions with the four ribonucleotide triphosphates. The polypeptide is CTP synthase (Beijerinckia indica subsp. indica (strain ATCC 9039 / DSM 1715 / NCIMB 8712)).